Here is a 798-residue protein sequence, read N- to C-terminus: Integrin beta-7 (798 aa).

The signal sequence occupies residues 1-19; it reads MVALPMVLVLLLVLSRGES. Residues 20-723 lie on the Extracellular side of the membrane; sequence ELDAKIPSTG…VRPQEKGADH (704 aa). The PSI domain occupies 44-92; it reads SCQPAPSCQKCILSHPSCAWCKQLNFTASGEAEARRCARREELLARGCP. 7 cysteine pairs are disulfide-bonded: Cys-51-Cys-476, Cys-54-Cys-80, Cys-64-Cys-91, Cys-216-Cys-223, Cys-271-Cys-311, Cys-412-Cys-428, and Cys-448-Cys-474. N-linked (GlcNAc...) asparagine glycosylation is present at Asn-68. The segment at 98–124 is disordered; sequence EPRGQQEVLQDQPLSQGARGEGATQLA. Residues 150 to 389 form the VWFA domain; it reads YPVDLYYLMD…QLIMDAYNSL (240 aa). Mg(2+) contacts are provided by Ser-161 and Ser-163. Ca(2+) contacts are provided by Ser-163, Asp-166, Asp-167, and Asp-198. Ca(2+) is bound by residues Asn-254, Asp-256, Pro-258, and Glu-259. A Mg(2+)-binding site is contributed by Glu-259. A glycan (N-linked (GlcNAc...) asparagine) is linked at Asn-279. Positions 289 and 373 each coordinate Ca(2+). N-linked (GlcNAc...) asparagine glycosylation occurs at Asn-434. Asn-477 carries N-linked (GlcNAc...) asparagine glycosylation. Cystine bridges form between Cys-478–Cys-497, Cys-488–Cys-500, Cys-502–Cys-511, Cys-513–Cys-545, Cys-527–Cys-543, Cys-537–Cys-548, Cys-550–Cys-559, Cys-561–Cys-582, Cys-566–Cys-580, Cys-574–Cys-585, Cys-587–Cys-596, Cys-598–Cys-621, Cys-605–Cys-619, Cys-613–Cys-624, Cys-626–Cys-635, Cys-638–Cys-641, Cys-645–Cys-688, Cys-651–Cys-670, and Cys-654–Cys-666. I-EGF domains follow at residues 478–512, 513–560, 561–597, and 598–636; these read CSDT…RLCE, CSVA…HLCE, CDDA…RACE, and CSGD…ALCD. A glycan (N-linked (GlcNAc...) asparagine) is linked at Asn-531. Asn-590 carries an N-linked (GlcNAc...) asparagine glycan. N-linked (GlcNAc...) asparagine glycans are attached at residues Asn-665 and Asn-674. A helical membrane pass occupies residues 724 to 746; it reads TQAIVLGCVGGIVAVGLGLVLAY. Over 747–798 the chain is Cytoplasmic; that stretch reads RLSVEIYDRREYSRFEKEQQQLNWKQDSNPLYKSAITTTINPRFQEADSPTL. Residue Tyr-778 is modified to Phosphotyrosine; by Tyr-kinases.

Belongs to the integrin beta chain family. Heterodimer of an alpha and a beta subunit. ITGB7/beta-7 associates with either ITGA4/alpha-4 or ITGAE/alpha-E. Integrin ITGA4/ITGB7 interacts with MADCAM1. Integrin ITGA4/ITGB7 interacts with VCAM1 and fibronectin. Interacts with FLNA (via filamin repeats 4, 9, 12, 17, 19, 21, and 23). As to quaternary structure, (Microbial infection) May interact with HIV-1 gp120. Expressed in a variety of leukocyte lines.

It is found in the cell membrane. Its function is as follows. Integrin ITGA4/ITGB7 (alpha-4/beta-7) (Peyer patches-specific homing receptor LPAM-1) is an adhesion molecule that mediates lymphocyte migration and homing to gut-associated lymphoid tissue (GALT). Integrin ITGA4/ITGB7 interacts with the cell surface adhesion molecules MADCAM1 which is normally expressed by the vascular endothelium of the gastrointestinal tract. Also interacts with VCAM1 and fibronectin, an extracellular matrix component. It recognizes one or more domains within the alternatively spliced CS-1 region of fibronectin. Interactions involve the tripeptide L-D-T in MADCAM1, and L-D-V in fibronectin. Integrin ITGAE/ITGB7 (alpha-E/beta-7, HML-1) is a receptor for E-cadherin. (Microbial infection) Binds to HIV-1 gp120, thereby allowing the virus to enter GALT, which is thought to be the major trigger of AIDS disease. Interaction would involve a tripeptide L-D-I in HIV-1 gp120. In Homo sapiens (Human), this protein is Integrin beta-7 (ITGB7).